A 512-amino-acid polypeptide reads, in one-letter code: Nephrocan (512 aa).

The signal sequence occupies residues 1-19; it reads MHPLWAFLLGLSLTNGLSA. The 25-residue stretch at 20–44 folds into the LRRNT domain; the sequence is NCPGRCSCDSMQSVQCYRLMELPSG. LRR repeat units lie at residues 45–69, 71–93, 94–117, 119–138, 139–162, 164–185, 186–208, 210–232, 234–253, 254–276, 277–299, 301–320, 321–344, 346–371, 373–389, 390–413, and 415–442; these read IPST…NFTG, LALE…TFKT, LSTL…LPAN, EVLK…EFEG, LKNL…MLSP, ASLQ…PLSL, PHLK…VFTS, QNLQ…LPKS, LSLK…DMKH, LENL…AQQL, TNLT…LPSR, QKLD…EFQD, LRDL…ALQR, SQLS…TLAR, DLKG…ELRD, LKQL…ALEG, and PRLR…VLKA. N66 carries N-linked (GlcNAc...) asparagine glycosylation. The segment covering 474–484 has biased composition (basic and acidic residues); it reads EHHLQQSEKSK. A disordered region spans residues 474–512; that stretch reads EHHLQQSEKSKETKKKPKPEDSSSIRLNMDDDDDDYEID. A compositionally biased stretch (acidic residues) spans 503-512; that stretch reads DDDDDDYEID.

It belongs to the small leucine-rich proteoglycan (SLRP) family. In terms of processing, N-glycosylated. As to expression, expressed at highest levels in the kidney, where it is primarily detected in the epithelial cells of distal tubules and collecting ducts, and more weakly in proximal epithelial cells. Expressed at lower levels in heart and lung (at protein level). Detected in skeletal muscle.

The protein localises to the secreted. In terms of biological role, may inhibit TGF-beta signaling. The chain is Nephrocan from Mus musculus (Mouse).